A 146-amino-acid polypeptide reads, in one-letter code: Inclusion membrane protein D (146 aa).

Transmembrane regions (helical) follow at residues 38-58 (AAVA…GLLF) and 68-88 (VVAA…ALVG).

It localises to the secreted. The protein localises to the host vacuole. It is found in the host pathogen-containing vacuole. Its subcellular location is the host pathogen-containing vacuole membrane. In terms of biological role, host inclusion membrane protein probably involved in early modification events of the chlamydial inclusion. The protein is Inclusion membrane protein D of Chlamydia trachomatis serovar L2 (strain ATCC VR-902B / DSM 19102 / 434/Bu).